A 170-amino-acid chain; its full sequence is Cytochrome P450 monooxygenase oryQ (170 aa).

Cys85 is a binding site for heme.

It belongs to the cytochrome P450 family. Heme serves as cofactor.

The protein operates within secondary metabolite biosynthesis. Its function is as follows. Cytochrome P450 monooxygenase; part of the gene cluster that mediates the biosynthesis of oryzines, natural products with an unusual maleidride backbone. The two subunits of the fungal fatty acid synthase oryfasA and oryfasB probably form octenoic acid. This fatty acid is most likely activated by the acyl-CoA ligase oryP to give octenyl-CoA before the citrate synthase-like protein oryE catalyzes condensation with oxaloacetate to form tricarboxylic acid. The next steps of the pathways are conjectural, but a favorite possible route has been proposed, beginning with decarboxylation and concomitant dehydration by the decarboxylase oryM, followed by tautomerization, which may lead to the production of a diene intermediate. Reduction of this diene intermediate could give the known metabolite piliformic acid. On the pathway to oryzine B and oryzine A, however, hydroxylation of the diene by the alpha-ketoglutarate-dependent dioxygenase oryG and lactonisation by the lactonohydrolases oryH or oryL could give oryzine B directly. Finally, enoyl reduction by the dehydrogenase oryD would then convert oryzine B into oryzine A. In Aspergillus oryzae (strain ATCC 42149 / RIB 40) (Yellow koji mold), this protein is Cytochrome P450 monooxygenase oryQ.